The chain runs to 201 residues: Putative 3-methyladenine DNA glycosylase (201 aa).

It belongs to the DNA glycosylase MPG family.

In Trichodesmium erythraeum (strain IMS101), this protein is Putative 3-methyladenine DNA glycosylase.